Reading from the N-terminus, the 35-residue chain is Conotoxin Cl6.16 (35 aa).

3 disulfide bridges follow: C10–C22, C16–C27, and C21–C34.

As to expression, expressed by the venom duct.

Its subcellular location is the secreted. In Californiconus californicus (California cone), this protein is Conotoxin Cl6.16.